Reading from the N-terminus, the 72-residue chain is Nod factor export ATP-binding protein I (72 aa).

It belongs to the ABC transporter superfamily. Lipooligosaccharide exporter (TC 3.A.1.102) family. The complex is composed of two ATP-binding proteins (NodI) and two transmembrane proteins (NodJ).

The protein localises to the cell inner membrane. Functionally, part of the ABC transporter complex NodIJ involved in the export of the nodulation factors (Nod factors), the bacterial signal molecules that induce symbiosis and subsequent nodulation induction. Nod factors are LCO (lipo-chitin oligosaccharide), a modified beta-1,4-linked N-acetylglucosamine oligosaccharide. This subunit is responsible for energy coupling to the transport system. In Rhizobium leguminosarum bv. trifolii, this protein is Nod factor export ATP-binding protein I.